The following is a 299-amino-acid chain: Ribosomal RNA small subunit methyltransferase A (299 aa).

Asn44, Val46, Gly71, Glu92, Asp122, and Asn141 together coordinate S-adenosyl-L-methionine.

It belongs to the class I-like SAM-binding methyltransferase superfamily. rRNA adenine N(6)-methyltransferase family. RsmA subfamily.

Its subcellular location is the cytoplasm. It catalyses the reaction adenosine(1518)/adenosine(1519) in 16S rRNA + 4 S-adenosyl-L-methionine = N(6)-dimethyladenosine(1518)/N(6)-dimethyladenosine(1519) in 16S rRNA + 4 S-adenosyl-L-homocysteine + 4 H(+). Its function is as follows. Specifically dimethylates two adjacent adenosines (A1518 and A1519) in the loop of a conserved hairpin near the 3'-end of 16S rRNA in the 30S particle. May play a critical role in biogenesis of 30S subunits. This Rhodococcus erythropolis (strain PR4 / NBRC 100887) protein is Ribosomal RNA small subunit methyltransferase A.